The chain runs to 257 residues: uncharacterized protein (257 aa).

A helical membrane pass occupies residues 6 to 26; it reads IFWLNLAAIIIISIVVSGDMF.

It belongs to the staphylococcal tandem lipoprotein family.

It is found in the cell membrane. This is an uncharacterized protein from Staphylococcus aureus (strain NCTC 8325 / PS 47).